A 1370-amino-acid polypeptide reads, in one-letter code: DNA-directed RNA polymerase subunit beta (1370 aa).

The protein belongs to the RNA polymerase beta chain family. In terms of assembly, the RNAP catalytic core consists of 2 alpha, 1 beta, 1 beta' and 1 omega subunit. When a sigma factor is associated with the core the holoenzyme is formed, which can initiate transcription.

It carries out the reaction RNA(n) + a ribonucleoside 5'-triphosphate = RNA(n+1) + diphosphate. In terms of biological role, DNA-dependent RNA polymerase catalyzes the transcription of DNA into RNA using the four ribonucleoside triphosphates as substrates. This chain is DNA-directed RNA polymerase subunit beta, found in Syntrophobacter fumaroxidans (strain DSM 10017 / MPOB).